The chain runs to 191 residues: Holliday junction branch migration complex subunit RuvA (191 aa).

A domain I region spans residues 1-64 (MIGKLTGTLL…EDAQLLYGFA (64 aa)). The domain II stretch occupies residues 65–140 (TAPERQAFRA…KLGADLGASH (76 aa)). Positions 140 to 142 (HGP) are flexible linker. The tract at residues 143–191 (AVSGAQADILQALLALGYNDKEAAAALKALPAQVEVSDGIKWALKALTK) is domain III.

The protein belongs to the RuvA family. As to quaternary structure, homotetramer. Forms an RuvA(8)-RuvB(12)-Holliday junction (HJ) complex. HJ DNA is sandwiched between 2 RuvA tetramers; dsDNA enters through RuvA and exits via RuvB. An RuvB hexamer assembles on each DNA strand where it exits the tetramer. Each RuvB hexamer is contacted by two RuvA subunits (via domain III) on 2 adjacent RuvB subunits; this complex drives branch migration. In the full resolvosome a probable DNA-RuvA(4)-RuvB(12)-RuvC(2) complex forms which resolves the HJ.

It is found in the cytoplasm. The RuvA-RuvB-RuvC complex processes Holliday junction (HJ) DNA during genetic recombination and DNA repair, while the RuvA-RuvB complex plays an important role in the rescue of blocked DNA replication forks via replication fork reversal (RFR). RuvA specifically binds to HJ cruciform DNA, conferring on it an open structure. The RuvB hexamer acts as an ATP-dependent pump, pulling dsDNA into and through the RuvAB complex. HJ branch migration allows RuvC to scan DNA until it finds its consensus sequence, where it cleaves and resolves the cruciform DNA. This chain is Holliday junction branch migration complex subunit RuvA, found in Verminephrobacter eiseniae (strain EF01-2).